We begin with the raw amino-acid sequence, 542 residues long: Thermosome subunit alpha (542 aa).

The protein belongs to the TCP-1 chaperonin family. Forms a Heterooligomeric complex of two stacked eight-membered rings.

Its function is as follows. Molecular chaperone; binds unfolded polypeptides in vitro, and has a weak ATPase activity. The sequence is that of Thermosome subunit alpha (thsA) from Methanothermobacter thermautotrophicus (strain ATCC 29096 / DSM 1053 / JCM 10044 / NBRC 100330 / Delta H) (Methanobacterium thermoautotrophicum).